An 821-amino-acid chain; its full sequence is KN motif and ankyrin repeat domain-containing protein 3 (821 aa).

Polar residues predominate over residues 1 to 10 (MAKFALNQNL). Disordered stretches follow at residues 1 to 36 (MAKF…PYSV), 58 to 184 (GPAA…AQLQ), 224 to 333 (LLAG…APET), and 385 to 547 (AAEE…GRCE). Residues 77 to 88 (RPGLAGARSPGA) are compositionally biased toward low complexity. Residues 128–150 (PRVEHTLRETSRRLELAQTHERA) show a composition bias toward basic and acidic residues. A compositionally biased stretch (low complexity) spans 151-181 (PSPGRGVPRSPRGSGRSSPAPNLAPASPGPA). Phosphoserine is present on residues Ser-152, Ser-160, Ser-164, Ser-167, Ser-168, and Ser-177. Residues 181–230 (AQLQLVREQMAAALRRLRELEDQARTLPELQEQVRALRAEKARLLAGRAQ) are a coiled coil. The segment covering 237 to 261 (AETRPDKLAQLRRLTERLATSERGG) has biased composition (basic and acidic residues). Phosphoserine occurs at positions 271, 280, and 293. A coiled-coil region spans residues 367 to 404 (GVSELLRGRLRELEEAREAAEEAAAGARAQLREATTQT). Low complexity-rich tracts occupy residues 388 to 400 (EAAA…LREA) and 494 to 507 (NGGA…SGSG). ANK repeat units lie at residues 622–652 (NGNT…EVNR), 656–690 (AGYS…DVNA), 695–724 (TGQT…DVNA), 728–758 (DGAT…DPAI), and 762–785 (EGTS…LHAH). Residues 784-821 (AHLSSGQPDTQSESPPGSQTATPGEGECGDNGENPQVQ) form a disordered region. Positions 787-805 (SSGQPDTQSESPPGSQTAT) are enriched in polar residues.

As to expression, strongly expressed in breast, liver, lung, skeletal muscle and kidney.

May be involved in the control of cytoskeleton formation by regulating actin polymerization. The sequence is that of KN motif and ankyrin repeat domain-containing protein 3 from Homo sapiens (Human).